We begin with the raw amino-acid sequence, 246 residues long: tRNA (guanine-N(1)-)-methyltransferase (246 aa).

S-adenosyl-L-methionine-binding positions include Gly113 and 132-137; that span reads LGDFVV.

It belongs to the RNA methyltransferase TrmD family. Homodimer.

The protein localises to the cytoplasm. It catalyses the reaction guanosine(37) in tRNA + S-adenosyl-L-methionine = N(1)-methylguanosine(37) in tRNA + S-adenosyl-L-homocysteine + H(+). In terms of biological role, specifically methylates guanosine-37 in various tRNAs. The protein is tRNA (guanine-N(1)-)-methyltransferase of Latilactobacillus sakei subsp. sakei (strain 23K) (Lactobacillus sakei subsp. sakei).